The sequence spans 302 residues: Glutaminase (302 aa).

Substrate contacts are provided by S61, N111, E155, N162, Y186, Y238, and V256.

It belongs to the glutaminase family. As to quaternary structure, homotetramer.

The catalysed reaction is L-glutamine + H2O = L-glutamate + NH4(+). The chain is Glutaminase from Pseudomonas fluorescens (strain SBW25).